Here is a 131-residue protein sequence, read N- to C-terminus: Large ribosomal subunit protein bL17 (131 aa).

Belongs to the bacterial ribosomal protein bL17 family. In terms of assembly, part of the 50S ribosomal subunit. Contacts protein L32.

This Shewanella amazonensis (strain ATCC BAA-1098 / SB2B) protein is Large ribosomal subunit protein bL17.